Consider the following 330-residue polypeptide: Probable ADP,ATP carrier protein At5g56450 (330 aa).

Residues 1 to 10 (MCISKEDEED) show a composition bias toward acidic residues. A disordered region spans residues 1–22 (MCISKEDEEDPSRNRRNQSPLS). A run of 6 helical transmembrane segments spans residues 27–61 (LKHFQKDLLAGAVMGGVVHTIVAPIERAKLLLQTQ), 103–127 (GSSVLRYYPSVALNFSLKDLYRSIL), 137–171 (IFSGALANFMAGSAAGCTALIVVYPLDIAHTRLAA), 203–230 (GLPASLHGVIIHRGLYFGGFDTVKEIFS), 236–270 (ELALWKRWGLAQAVTTSAGLASYPLDTVRRRIMMQ), and 300–325 (GALSNMFRSTGSAAILVFYDEVKRFL). Solcar repeat units lie at residues 28 to 126 (KHFQ…YRSI), 139 to 228 (SGAL…VKEI), and 241 to 324 (KRWG…VKRF). ADP contacts are provided by R108 and K120. R264 contacts ADP. Residues 264–269 (RRRIMM) carry the Substrate recognition motif.

This sequence belongs to the mitochondrial carrier (TC 2.A.29) family. As to quaternary structure, monomer.

The protein localises to the membrane. The catalysed reaction is ADP(in) + ATP(out) = ADP(out) + ATP(in). Functionally, ADP:ATP antiporter that catalyzes the exchange of ADP and ATP across the membrane. This chain is Probable ADP,ATP carrier protein At5g56450, found in Arabidopsis thaliana (Mouse-ear cress).